The sequence spans 229 residues: uncharacterized protein (229 aa).

7 helical membrane passes run 6 to 26, 36 to 56, 80 to 99, 114 to 134, 144 to 164, 174 to 194, and 207 to 224; these read LFFVSYVLYGLGFVSLIFLPT, LVSVIIGLIANYEMKFNILLA, SVYDVFCHTIMMMLCYHRIY, VLSVLFILGAMINCLVSHLII, IFEYTTIFQAVSTGYWVATML, FYYHWLLWITLMTTNWFIYKF, and YVEAVFIICTWYSGVLSS.

The protein belongs to the mimivirus L68/R809 family.

It localises to the membrane. This is an uncharacterized protein from Acanthamoeba polyphaga (Amoeba).